Reading from the N-terminus, the 122-residue chain is Small ribosomal subunit protein uS13 (122 aa).

The tract at residues 93 to 122 is disordered; that stretch reads RRGLPVRGQRTKTNARTRKGPKKTIAGKKK.

The protein belongs to the universal ribosomal protein uS13 family. In terms of assembly, part of the 30S ribosomal subunit. Forms a loose heterodimer with protein S19. Forms two bridges to the 50S subunit in the 70S ribosome.

In terms of biological role, located at the top of the head of the 30S subunit, it contacts several helices of the 16S rRNA. In the 70S ribosome it contacts the 23S rRNA (bridge B1a) and protein L5 of the 50S subunit (bridge B1b), connecting the 2 subunits; these bridges are implicated in subunit movement. Contacts the tRNAs in the A and P-sites. The polypeptide is Small ribosomal subunit protein uS13 (Corynebacterium kroppenstedtii (strain DSM 44385 / JCM 11950 / CIP 105744 / CCUG 35717)).